The primary structure comprises 195 residues: Dual-action ribosomal maturation protein DarP (195 aa).

The protein belongs to the DarP family.

It localises to the cytoplasm. In terms of biological role, member of a network of 50S ribosomal subunit biogenesis factors which assembles along the 30S-50S interface, preventing incorrect 23S rRNA structures from forming. Promotes peptidyl transferase center (PTC) maturation. This Stenotrophomonas maltophilia (strain K279a) protein is Dual-action ribosomal maturation protein DarP.